A 435-amino-acid polypeptide reads, in one-letter code: S-phase entry cyclin-5 (435 aa).

2 disordered regions span residues 36-70 and 104-126; these read KRAL…NPLS and NDRT…DAAS. Positions 41–52 are enriched in low complexity; that stretch reads KNDSSSKQQVQD. The span at 110-124 shows a compositional bias: acidic residues; it reads EQEEEEEEEGEDDDA.

Belongs to the cyclin family. Cyclin AB subfamily.

Required for efficient progression through S phase and possibly for the normal progression through meiosis. Interacts with CDC28. The protein is S-phase entry cyclin-5 (CLB5) of Saccharomyces cerevisiae (strain ATCC 204508 / S288c) (Baker's yeast).